Consider the following 152-residue polypeptide: D-aminoacyl-tRNA deacylase (152 aa).

Positions G137–P138 match the Gly-cisPro motif, important for rejection of L-amino acids motif.

Belongs to the DTD family. As to quaternary structure, homodimer.

It is found in the cytoplasm. It carries out the reaction glycyl-tRNA(Ala) + H2O = tRNA(Ala) + glycine + H(+). It catalyses the reaction a D-aminoacyl-tRNA + H2O = a tRNA + a D-alpha-amino acid + H(+). Its function is as follows. An aminoacyl-tRNA editing enzyme that deacylates mischarged D-aminoacyl-tRNAs. Also deacylates mischarged glycyl-tRNA(Ala), protecting cells against glycine mischarging by AlaRS. Acts via tRNA-based rather than protein-based catalysis; rejects L-amino acids rather than detecting D-amino acids in the active site. By recycling D-aminoacyl-tRNA to D-amino acids and free tRNA molecules, this enzyme counteracts the toxicity associated with the formation of D-aminoacyl-tRNA entities in vivo and helps enforce protein L-homochirality. In Geobacter sulfurreducens (strain ATCC 51573 / DSM 12127 / PCA), this protein is D-aminoacyl-tRNA deacylase.